The following is a 500-amino-acid chain: Glutamyl-tRNA(Gln) amidotransferase subunit A (500 aa).

Active-site charge relay system residues include Lys-81 and Ser-161. The active-site Acyl-ester intermediate is Ser-185.

It belongs to the amidase family. GatA subfamily. In terms of assembly, heterotrimer of A, B and C subunits.

The enzyme catalyses L-glutamyl-tRNA(Gln) + L-glutamine + ATP + H2O = L-glutaminyl-tRNA(Gln) + L-glutamate + ADP + phosphate + H(+). Allows the formation of correctly charged Gln-tRNA(Gln) through the transamidation of misacylated Glu-tRNA(Gln) in organisms which lack glutaminyl-tRNA synthetase. The reaction takes place in the presence of glutamine and ATP through an activated gamma-phospho-Glu-tRNA(Gln). In Rhodospirillum rubrum (strain ATCC 11170 / ATH 1.1.1 / DSM 467 / LMG 4362 / NCIMB 8255 / S1), this protein is Glutamyl-tRNA(Gln) amidotransferase subunit A.